The sequence spans 220 residues: Fructose-6-phosphate aldolase (220 aa).

Lysine 85 (schiff-base intermediate with substrate) is an active-site residue.

The protein belongs to the transaldolase family. Type 3A subfamily. As to quaternary structure, homodecamer.

The protein localises to the cytoplasm. The catalysed reaction is beta-D-fructose 6-phosphate = dihydroxyacetone + D-glyceraldehyde 3-phosphate. Its function is as follows. Catalyzes the reversible formation of fructose 6-phosphate from dihydroxyacetone and D-glyceraldehyde 3-phosphate via an aldolization reaction. This is Fructose-6-phosphate aldolase from Klebsiella pneumoniae subsp. pneumoniae (strain ATCC 700721 / MGH 78578).